A 215-amino-acid chain; its full sequence is Variable small protein 2 (215 aa).

The first 18 residues, 1–18 (MRKRISAIIMTLFMVFMS), serve as a signal peptide directing secretion. A lipid anchor (N-palmitoyl cysteine) is attached at Cys19. Cys19 carries S-diacylglycerol cysteine lipidation.

It belongs to the variable small protein (Vsp) family.

The protein resides in the cell outer membrane. Its function is as follows. The Vlp and Vsp proteins are antigenically distinct proteins, only one vlp or vsp gene is transcriptionally active at any one time. Switching between these genes is a mechanism of host immune response evasion. This chain is Variable small protein 2, found in Borrelia hermsii.